The sequence spans 484 residues: Regulator of G-protein signaling 9 (484 aa).

Residues 30-105 form the DEP domain; it reads PDTGVRVQNQ…PDSSLYRFQT (76 aa). Positions 219–280 constitute a G protein gamma domain; the sequence is VVSVRKEIMY…ITDDTQFWDL (62 aa). In terms of domain architecture, RGS spans 299–414; sequence NFSELIRDPK…LKSPIYKEML (116 aa). A disordered region spans residues 460-484; that stretch reads TTVDITQVMSKLDRRSQLRKEPPPK. The segment covering 470–484 has biased composition (basic and acidic residues); that stretch reads KLDRRSQLRKEPPPK.

Heterodimer with GNB5. Interacts with RGS7BP, leading to regulate the subcellular location of the heterodimer formed with GNB5. Component of the RGS9-1-Gbeta5 complex composed of RGS9 (RGS9-1), Gbeta5 (GNB5) and RGS9BP. Interacts with PDE6G and GNAT1. Post-translationally, phosphorylation is decreased by light exposition. Photoreceptor outer segments.

It localises to the membrane. Functionally, inhibits signal transduction by increasing the GTPase activity of G protein alpha subunits thereby driving them into their inactive GDP-bound form. Binds to GNAT1. Involved in phototransduction; key element in the recovery phase of visual transduction. The chain is Regulator of G-protein signaling 9 (RGS9) from Bos taurus (Bovine).